Here is a 299-residue protein sequence, read N- to C-terminus: Acetaldehyde dehydrogenase (299 aa).

The Acyl-thioester intermediate role is filled by Cys-126. Residues 157–165 and Asn-267 each bind NAD(+); that span reads SAGPGTRQN.

It belongs to the acetaldehyde dehydrogenase family.

It carries out the reaction acetaldehyde + NAD(+) + CoA = acetyl-CoA + NADH + H(+). The sequence is that of Acetaldehyde dehydrogenase (mhpF) from Carboxydothermus hydrogenoformans (strain ATCC BAA-161 / DSM 6008 / Z-2901).